We begin with the raw amino-acid sequence, 973 residues long: Protein HypA (973 aa).

In Clostridium perfringens (strain 13 / Type A), this protein is Protein HypA (hypA).